The chain runs to 130 residues: Small ribosomal subunit protein uS9 (130 aa).

Positions 98–130 are disordered; the sequence is LKRAGLLTRDPRMKERKKPGLKKARRSPQFSKR. Basic residues predominate over residues 111 to 130; that stretch reads KERKKPGLKKARRSPQFSKR.

It belongs to the universal ribosomal protein uS9 family.

This is Small ribosomal subunit protein uS9 from Staphylococcus haemolyticus (strain JCSC1435).